The chain runs to 50 residues: MARYRCCRSQSRSRCCRPRRRCRRRRRRSCRARRRATRCCRRRYRLSRRY.

Belongs to the protamine P1 family. In terms of tissue distribution, testis.

It localises to the nucleus. It is found in the chromosome. Its function is as follows. Protamines substitute for histones in the chromatin of sperm during the haploid phase of spermatogenesis. They compact sperm DNA into a highly condensed, stable and inactive complex. This chain is Sperm protamine P1 (PRM1), found in Trachypithecus phayrei (Phayre's leaf monkey).